Here is a 240-residue protein sequence, read N- to C-terminus: DNA repair protein RecO (240 aa).

It belongs to the RecO family.

Its function is as follows. Involved in DNA repair and RecF pathway recombination. The polypeptide is DNA repair protein RecO (Wolbachia pipientis wMel).